A 1400-amino-acid polypeptide reads, in one-letter code: S phase cyclin A-associated protein in the endoplasmic reticulum (1400 aa).

Disordered stretches follow at residues 36 to 61, 226 to 277, 517 to 550, and 701 to 723; these read ESKD…GTHK, VKAH…IRSR, PARP…HEEK, and RIEQ…RARD. A compositionally biased stretch (polar residues) spans 231–243; the sequence is TGSTASSEITPAQ. The span at 539–550 shows a compositional bias: basic and acidic residues; that stretch reads TIAESKKKHEEK. The C2H2-type zinc finger occupies 792–816; the sequence is KQCSLCNVLISSEVYLFSHVKGRKH. Serine 832 carries the phosphoserine modification.

As to quaternary structure, interacts with CCNA2/CDK2 complex, but not with CCNA2/CDC2, CCNB1/CDC2 or CCNE1/CDK2 complexes, at multiple phases of the cell cycle, including S and G2/M. In terms of processing, phosphorylated in vitro by the CCNA2/CDK2 complex. As to expression, widely expressed with high expression in testis. Isoform 1 is detected in various tissues, including retina, fetal and adult brain. Isoform 2 is expressed in the retina at high levels, and in the brain at very low levels.

It localises to the endoplasmic reticulum. The protein resides in the nucleus. CCNA2/CDK2 regulatory protein that transiently maintains CCNA2 in the cytoplasm. The protein is S phase cyclin A-associated protein in the endoplasmic reticulum of Homo sapiens (Human).